The chain runs to 808 residues: Homeobox-leucine zipper protein HDG1 (808 aa).

Positions 57 to 121 are disordered; sequence LQTNGEMSRN…KRYHRHTPKQ (65 aa). Residues 79-90 show a composition bias toward basic and acidic residues; the sequence is SRGEDVESRSES. A compositionally biased stretch (basic residues) spans 108–119; it reads LKKKKRYHRHTP. The homeobox DNA-binding region spans 110 to 169; the sequence is KKKRYHRHTPKQIQDLESVFKECAHPDEKQRLDLSRRLNLDPRQVKFWFQNRRTQMKTQI. A coiled-coil region spans residues 158 to 233; the sequence is FQNRRTQMKT…SRLKDELDRV (76 aa). The START domain occupies 310–541; sequence DFDQRSRYLD…LQRQCECLTI (232 aa).

This sequence belongs to the HD-ZIP homeobox family. Class IV subfamily. In terms of assembly, interacts with CFL1. Binds with BBM. In terms of tissue distribution, expressed in trichomes forming at the base of young leaves, in endodermal cell lines around emergent lateral roots and in the epidermal layer of the stamen filament.

It localises to the nucleus. In terms of biological role, probable transcription factor. Promotes cuticle development probably by modulating the expression of the downstream genes BDG and FDH, possibly repressed in a CFL1-dependent manner. Involved, together with PDF2, in the regulation of flower organs development by promoting the expression of APETALA 3 (AP3) in the epidermis and internal cell layers of developing flowers. In opposition to BBM, seems to promote cell differentiation and giant cell identity via transcriptional repression of meristem and cell proliferation genes. In Arabidopsis thaliana (Mouse-ear cress), this protein is Homeobox-leucine zipper protein HDG1.